The chain runs to 314 residues: tRNA dimethylallyltransferase (314 aa).

An ATP-binding site is contributed by 40–47 (GPTASGKS). 42–47 (TASGKS) provides a ligand contact to substrate.

Belongs to the IPP transferase family. Monomer. Requires Mg(2+) as cofactor.

The enzyme catalyses adenosine(37) in tRNA + dimethylallyl diphosphate = N(6)-dimethylallyladenosine(37) in tRNA + diphosphate. Catalyzes the transfer of a dimethylallyl group onto the adenine at position 37 in tRNAs that read codons beginning with uridine, leading to the formation of N6-(dimethylallyl)adenosine (i(6)A). The sequence is that of tRNA dimethylallyltransferase from Cereibacter sphaeroides (strain KD131 / KCTC 12085) (Rhodobacter sphaeroides).